Here is a 116-residue protein sequence, read N- to C-terminus: Ribosome-binding factor A (116 aa).

It belongs to the RbfA family. As to quaternary structure, monomer. Binds 30S ribosomal subunits, but not 50S ribosomal subunits or 70S ribosomes.

It is found in the cytoplasm. One of several proteins that assist in the late maturation steps of the functional core of the 30S ribosomal subunit. Associates with free 30S ribosomal subunits (but not with 30S subunits that are part of 70S ribosomes or polysomes). Required for efficient processing of 16S rRNA. May interact with the 5'-terminal helix region of 16S rRNA. This Buchnera aphidicola subsp. Cinara cedri (strain Cc) protein is Ribosome-binding factor A.